We begin with the raw amino-acid sequence, 958 residues long: SLIT and NTRK-like protein 5 (958 aa).

The N-terminal stretch at 1–40 (MHTCCPPVTLEQDLHRKMHSWMLQTLAFAVTSLVLSCAET) is a signal peptide. Residues 41–664 (IDYYGEICDN…GGGASSVPLS (624 aa)) are Extracellular-facing. LRR repeat units lie at residues 82–103 (PIYH…EFVN), 106–127 (GASI…AFHG), 130–151 (GLRR…TFLG), 154–175 (NLEY…AFGK), 178–199 (LLQV…LFRF), and 201–222 (PLTH…GLLQ). An N-linked (GlcNAc...) asparagine glycan is attached at asparagine 103. The LRRCT 1 domain maps to 235–286 (NPWNCSCELISLKDWLDSISYSALVGDVVCETPFRLHGRDLDEVSKQELCPR). The segment at 317–358 (ATSSSAVYKPPLKPPKGTRQPNKPRVRPTSRQPSKDLGYSNY) is disordered. The 43-residue stretch at 365–407 (QTKSPVPLECPTACSCNLQISDLGLNVNCQERKIESIAELQPK) folds into the LRRNT domain. 6 LRR repeats span residues 410–431 (NPKK…DFLE), 434–455 (GLDL…AFGD), 458–479 (NLRR…LFYG), 482–503 (SLQY…TFDP), 506–527 (NLQL…VFSG), and 529–550 (TLLR…GVLD). In terms of domain architecture, LRRCT 2 spans 563–614 (NPWDCTCDIVGMKLWVEQLKVGVLVDEVICKAPKKFAETDMRSIKSELLCPD). Asparagine 644 is a glycosylation site (N-linked (GlcNAc...) asparagine). Residues 665-685 (VLILSLLLVFIMSVFVAAGLF) traverse the membrane as a helical segment. The Cytoplasmic segment spans residues 686–958 (VLVMKRRKKN…LEKQTTFSQF (273 aa)). The interval 789 to 844 (NHHLQQQQQPPPPPQQPQQQPPPQLQLQPGEEERRESHHLRSPAYSVSTIEPREDL) is disordered. A compositionally biased stretch (pro residues) spans 797–812 (QPPPPPQQPQQQPPPQ).

It belongs to the SLITRK family. As to expression, expressed predominantly in the cerebral cortex of the brain but also at low levels in the spinal cord and medulla.

The protein resides in the membrane. In terms of biological role, suppresses neurite outgrowth. In Homo sapiens (Human), this protein is SLIT and NTRK-like protein 5 (SLITRK5).